Consider the following 455-residue polypeptide: Tubby-like F-box protein 1 (455 aa).

Residues 54–112 (ETPWANLPPELLRDVIKRLEESESVWPARRHVVACASVCRSWRDMCKEIVQSPELSGKI) form the F-box domain. The interval 386–414 (QPQPQPQPQPQPQPLTQPQPSGQTDGPDK) is disordered. The segment covering 388–402 (QPQPQPQPQPQPLTQ) has biased composition (pro residues).

It belongs to the TUB family. As to expression, ubiquitous.

The protein is Tubby-like F-box protein 1 of Arabidopsis thaliana (Mouse-ear cress).